Reading from the N-terminus, the 174-residue chain is Acetolactate synthase small subunit (174 aa).

The ACT domain maps to 4 to 78 (TLSVLVQDEA…NILNVQDVTN (75 aa)).

It belongs to the acetolactate synthase small subunit family. Dimer of large and small chains.

Its subcellular location is the plastid. The protein localises to the chloroplast. The catalysed reaction is 2 pyruvate + H(+) = (2S)-2-acetolactate + CO2. Its pathway is amino-acid biosynthesis; L-isoleucine biosynthesis; L-isoleucine from 2-oxobutanoate: step 1/4. The protein operates within amino-acid biosynthesis; L-valine biosynthesis; L-valine from pyruvate: step 1/4. This chain is Acetolactate synthase small subunit (ilvH), found in Porphyra purpurea (Red seaweed).